We begin with the raw amino-acid sequence, 136 residues long: Active regulator of SIRT1 (136 aa).

The residue at position 7 (R7) is a Citrulline. A disordered region spans residues 13 to 58 (LAASEAPRDPPGQAKPRGAPVKRPRKTKAIQAQKLRNSAKGKVPKS). Phosphoserine is present on S84.

This sequence belongs to the AROS family. As to quaternary structure, part of the small subunit (SSU) processome, composed of more than 70 proteins and the RNA chaperone small nucleolar RNA (snoRNA) U3. Interacts with RPS19; the interaction is direct and mediates the integration of RPS19 in state post-A1. Interacts with SIRT1. In terms of processing, citrullinated by PADI4. In terms of tissue distribution, widely expressed (at protein level).

It localises to the nucleus. Its subcellular location is the nucleolus. Functionally, part of the small subunit (SSU) processome, first precursor of the small eukaryotic ribosomal subunit. During the assembly of the SSU processome in the nucleolus, many ribosome biogenesis factors, an RNA chaperone and ribosomal proteins associate with the nascent pre-rRNA and work in concert to generate RNA folding, modifications, rearrangements and cleavage as well as targeted degradation of pre-ribosomal RNA by the RNA exosome. Acts as a chaperone that specifically mediates the integration of RPS19 in state post-A1. Direct regulator of SIRT1. Enhances SIRT1-mediated deacetylation of p53/TP53, thereby participating in inhibition of p53/TP53-mediated transcriptional activity. In Homo sapiens (Human), this protein is Active regulator of SIRT1.